The chain runs to 94 residues: Evasin P1172 (94 aa).

3 disulfides stabilise this stretch: cysteine 35–cysteine 54, cysteine 39–cysteine 56, and cysteine 50–cysteine 67. 4 N-linked (GlcNAc...) asparagine glycosylation sites follow: asparagine 38, asparagine 44, asparagine 53, and asparagine 80.

The protein resides in the secreted. Salivary chemokine-binding protein which binds to host chemokines CXCL1, CXCL2, CXCL5 and CXCL8. The protein is Evasin P1172 of Ixodes ricinus (Common tick).